Reading from the N-terminus, the 402-residue chain is Protein FAM53A (402 aa).

Ser119 carries the post-translational modification Phosphoserine. A disordered region spans residues 170–215; that stretch reads LVPGLPRRPVSPAGPTSPLTPRPASASSGFVDGSEGSTSSGPPWLS. The Nuclear localization signal motif lies at 273-281; it reads RRVRRKRRR. Phosphoserine occurs at positions 306 and 309. A compositionally biased stretch (polar residues) spans 323–333; the sequence is TLVSSPCNSQG. Positions 323-402 are disordered; that stretch reads TLVSSPCNSQ…DLDLEQIENN (80 aa). Over residues 336-345 the composition is skewed to low complexity; that stretch reads GIITPSSSPR.

This sequence belongs to the FAM53 family.

Its subcellular location is the nucleus. In terms of biological role, may play an important role in neural development; the dorsomedial roof of the third ventricle. This Mus musculus (Mouse) protein is Protein FAM53A.